A 323-amino-acid chain; its full sequence is D-alanine--D-alanine ligase (323 aa).

The 197-residue stretch at 121 to 317 (RIWFLTNNIN…FTNLIEEIIK (197 aa)) folds into the ATP-grasp domain. ATP is bound at residue 147 to 199 (PMKRPYVIKPLAQGSSIGVEVIFAEDDFNFADYDFPYGDQVIIEQYIKGQGRE). Mg(2+)-binding residues include Glu270, Glu284, and Asn286.

Belongs to the D-alanine--D-alanine ligase family. Mg(2+) serves as cofactor. Requires Mn(2+) as cofactor.

It localises to the cytoplasm. It carries out the reaction 2 D-alanine + ATP = D-alanyl-D-alanine + ADP + phosphate + H(+). The protein operates within cell wall biogenesis; peptidoglycan biosynthesis. In terms of biological role, cell wall formation. The chain is D-alanine--D-alanine ligase from Rickettsia peacockii (strain Rustic).